A 91-amino-acid polypeptide reads, in one-letter code: Potassium channel toxin BmTXK-beta-2 (91 aa).

Residues 1 to 19 (MQRNLVVLLFLGMVALSSC) form the signal peptide. The propeptide occupies 20–27 (GLREKHFQ). The region spanning 54–91 (QFGCPAYQGYCDDHCQDIKKEEGFCHGFKCKCGIPMGF) is the BetaSPN-type CS-alpha/beta domain. 3 cysteine pairs are disulfide-bonded: cysteine 57/cysteine 78, cysteine 64/cysteine 83, and cysteine 68/cysteine 85.

Belongs to the long chain scorpion toxin family. Class 1 subfamily. In terms of tissue distribution, expressed by the venom gland.

It is found in the secreted. Its function is as follows. Inhibits voltage-gated potassium channel. The chain is Potassium channel toxin BmTXK-beta-2 from Olivierus martensii (Manchurian scorpion).